Consider the following 383-residue polypeptide: Podocin (383 aa).

The span at 1–41 (MERRARSSSRESRGRGGRTPHKENKRAKAERSGGGRGRQEA) shows a compositional bias: basic and acidic residues. The segment at 1-76 (MERRARSSSR…VDEVRGSGEE (76 aa)) is disordered. The Cytoplasmic portion of the chain corresponds to 1–102 (MERRARSSSR…TKSSGLGACE (102 aa)). Residue cysteine 101 is the site of S-palmitoyl cysteine attachment. Residues 103-123 (WLLVLISLLFIIMTFPFSIWF) lie within the membrane without spanning it. Residues 124–383 (CVKVVQEYER…NPKKKDSPML (260 aa)) are Cytoplasmic-facing. N-linked (GlcNAc...) asparagine glycosylation is present at glutamine 287. Residues 355–383 (NRTQGSLPFPSPSKPVEPLNPKKKDSPML) form a disordered region. Residues 374-383 (NPKKKDSPML) are compositionally biased toward basic and acidic residues.

This sequence belongs to the band 7/mec-2 family. As to quaternary structure, interacts with nephrin/NPHS1 and KIRREL1. Interacts directly with CD2AP. Interacts with DDN. In terms of processing, glycosylated. As to expression, almost exclusively expressed in the podocytes of fetal and mature kidney glomeruli.

It localises to the cell membrane. Its subcellular location is the endoplasmic reticulum. Its function is as follows. Plays a role in the regulation of glomerular permeability, acting probably as a linker between the plasma membrane and the cytoskeleton. The polypeptide is Podocin (NPHS2) (Homo sapiens (Human)).